A 400-amino-acid polypeptide reads, in one-letter code: Enoyl-[acyl-carrier-protein] reductase [NADH] 2 (400 aa).

Residues 48–53 (GASSGF), 75–76 (FE), 112–113 (DA), and 141–142 (LA) contribute to the NAD(+) site. Tyr228 contributes to the substrate binding site. The Proton donor role is filled by Tyr238. Residues Lys247 and 276-278 (LVT) contribute to the NAD(+) site.

This sequence belongs to the TER reductase family. Monomer.

The catalysed reaction is a 2,3-saturated acyl-[ACP] + NAD(+) = a (2E)-enoyl-[ACP] + NADH + H(+). Its pathway is lipid metabolism; fatty acid biosynthesis. In terms of biological role, involved in the final reduction of the elongation cycle of fatty acid synthesis (FAS II). Catalyzes the reduction of a carbon-carbon double bond in an enoyl moiety that is covalently linked to an acyl carrier protein (ACP). This Vibrio vulnificus (strain CMCP6) protein is Enoyl-[acyl-carrier-protein] reductase [NADH] 2.